We begin with the raw amino-acid sequence, 659 residues long: tRNA 5-methylaminomethyl-2-thiouridine biosynthesis bifunctional protein MnmC (659 aa).

The segment at 1-236 (MKPVMPHAQL…KWEILRGEFL (236 aa)) is tRNA (mnm(5)s(2)U34)-methyltransferase. The segment at 267–659 (IGAGLAGCAT…FALRRLIRGK (393 aa)) is FAD-dependent cmnm(5)s(2)U34 oxidoreductase.

The protein in the N-terminal section; belongs to the methyltransferase superfamily. tRNA (mnm(5)s(2)U34)-methyltransferase family. It in the C-terminal section; belongs to the DAO family. FAD is required as a cofactor.

It localises to the cytoplasm. It catalyses the reaction 5-aminomethyl-2-thiouridine(34) in tRNA + S-adenosyl-L-methionine = 5-methylaminomethyl-2-thiouridine(34) in tRNA + S-adenosyl-L-homocysteine + H(+). Catalyzes the last two steps in the biosynthesis of 5-methylaminomethyl-2-thiouridine (mnm(5)s(2)U) at the wobble position (U34) in tRNA. Catalyzes the FAD-dependent demodification of cmnm(5)s(2)U34 to nm(5)s(2)U34, followed by the transfer of a methyl group from S-adenosyl-L-methionine to nm(5)s(2)U34, to form mnm(5)s(2)U34. The chain is tRNA 5-methylaminomethyl-2-thiouridine biosynthesis bifunctional protein MnmC from Pseudomonas fluorescens (strain Pf0-1).